The chain runs to 1363 residues: Kinesin-like protein kif7 (1363 aa).

One can recognise a Kinesin motor domain in the interval 15–347; sequence AVQVAVRVRP…LNYAKRARNI (333 aa). 94–101 serves as a coordination point for ATP; the sequence is GQTGSGKT. Coiled coils occupy residues 358-385 and 491-552; these read EPDRIEGLELQIKALRRALENRQRSETR and EDWR…LLAQ. Residues 603-622 are compositionally biased toward polar residues; sequence DSSSYSEQTQWDGTHGNTHC. The interval 603 to 642 is disordered; sequence DSSSYSEQTQWDGTHGNTHCESSRKLNRDEDGHMQTTRDK. Residues 623–640 show a composition bias toward basic and acidic residues; it reads ESSRKLNRDEDGHMQTTR. 2 coiled-coil regions span residues 714–1068 and 1116–1225; these read LLQA…AAIE and DKVV…LREM. A disordered region spans residues 1314 to 1346; the sequence is IVQPGMNSTHWSGSTSLPVTRPRREPRRSSLNT. Positions 1318 to 1331 are enriched in polar residues; that stretch reads GMNSTHWSGSTSLP.

The protein belongs to the TRAFAC class myosin-kinesin ATPase superfamily. Kinesin family. KIF27 subfamily. Binds microtubules. Interacts with gli1 and sufu.

Its subcellular location is the cytoplasm. The protein resides in the cytoskeleton. It is found in the cell projection. It localises to the cilium. Functionally, acts downstream of smo as an intracellular repressor of hedgehog signaling pathway, mainly through the suppression of gli1 activity. This negative regulatory effect is enhanced in conjunction with the suppressor of fused (sufu) protein. Positively regulates gli2a activity by promoting its dissociation from sufu. Involved in the regulation of microtubular dynamics. The protein is Kinesin-like protein kif7 (kif7) of Danio rerio (Zebrafish).